A 714-amino-acid polypeptide reads, in one-letter code: Glycine--tRNA ligase beta subunit (714 aa).

The protein belongs to the class-II aminoacyl-tRNA synthetase family. In terms of assembly, tetramer of two alpha and two beta subunits.

The protein localises to the cytoplasm. The catalysed reaction is tRNA(Gly) + glycine + ATP = glycyl-tRNA(Gly) + AMP + diphosphate. In Rhodospirillum centenum (strain ATCC 51521 / SW), this protein is Glycine--tRNA ligase beta subunit.